A 303-amino-acid chain; its full sequence is Coenzyme PQQ synthesis protein B (303 aa).

The protein belongs to the PqqB family.

It functions in the pathway cofactor biosynthesis; pyrroloquinoline quinone biosynthesis. Functionally, may be involved in the transport of PQQ or its precursor to the periplasm. This is Coenzyme PQQ synthesis protein B from Pseudomonas entomophila (strain L48).